We begin with the raw amino-acid sequence, 64 residues long: Small ribosomal subunit protein bS21 (64 aa).

The protein belongs to the bacterial ribosomal protein bS21 family.

This is Small ribosomal subunit protein bS21 from Amoebophilus asiaticus (strain 5a2).